Consider the following 747-residue polypeptide: Putative T-box protein 31 (747 aa).

A DNA-binding region (T-box) is located at residues 33–199 (QMLTKRKKTN…AGPAAKKTPD (167 aa)). Disordered stretches follow at residues 268-289 (SLSSPAALKHDSTVSSDSDFDD) and 332-364 (SINNPGYLSTASSPAALNQDSSASEKSSIVRDK). Positions 332 to 358 (SINNPGYLSTASSPAALNQDSSASEKS) are enriched in polar residues.

The protein localises to the nucleus. The polypeptide is Putative T-box protein 31 (tbx-31) (Caenorhabditis elegans).